A 426-amino-acid polypeptide reads, in one-letter code: Enolase (426 aa).

Residue Gln163 coordinates (2R)-2-phosphoglycerate. Glu205 acts as the Proton donor in catalysis. Mg(2+) contacts are provided by Asp242, Glu286, and Asp313. 4 residues coordinate (2R)-2-phosphoglycerate: Lys338, Arg367, Ser368, and Lys389. Lys338 acts as the Proton acceptor in catalysis.

This sequence belongs to the enolase family. Mg(2+) is required as a cofactor.

It is found in the cytoplasm. It localises to the secreted. Its subcellular location is the cell surface. The catalysed reaction is (2R)-2-phosphoglycerate = phosphoenolpyruvate + H2O. The protein operates within carbohydrate degradation; glycolysis; pyruvate from D-glyceraldehyde 3-phosphate: step 4/5. Catalyzes the reversible conversion of 2-phosphoglycerate (2-PG) into phosphoenolpyruvate (PEP). It is essential for the degradation of carbohydrates via glycolysis. This Helicobacter pylori (strain G27) protein is Enolase.